An 823-amino-acid chain; its full sequence is Tax1-binding protein 1 homolog B (823 aa).

The stretch at 149 to 487 (VTTKASYLEQ…QKQVVKFNEQ (339 aa)) forms a coiled coil. 2 disordered regions span residues 342–377 (HRQL…QQAN) and 486–519 (EQQG…STSD). Basic and acidic residues predominate over residues 356-368 (KALREQLRQKEEQ). Residues 498 to 518 (AAAGPLSASPEASAPGSPSTS) show a composition bias toward low complexity. The stretch at 548–638 (QMLNEERERC…NREEEQKDSN (91 aa)) forms a coiled coil. The disordered stretch occupies residues 650–746 (MPYAQDDPSP…EPAAPEPAEF (97 aa)). Residues 723 to 739 (LEEPEEPQSTQNDDEPA) are compositionally biased toward acidic residues. 2 consecutive UBZ1-type zinc fingers follow at residues 762-788 (QKRC…VESH) and 789-815 (WKIC…VLTH). The Zn(2+) site is built by cysteine 765, cysteine 768, histidine 784, histidine 788, cysteine 792, cysteine 795, histidine 811, and histidine 815.

Expressed at relatively high levels in both proximal and distal regions of the fin bud during pectoral fin development.

Functionally, may have anti-apoptotic activity. This Danio rerio (Zebrafish) protein is Tax1-binding protein 1 homolog B (tax1bp1b).